A 340-amino-acid polypeptide reads, in one-letter code: Sideroflexin-5 (340 aa).

4 consecutive transmembrane segments (helical) span residues isoleucine 103 to leucine 123, phenylalanine 163 to valine 183, leucine 254 to leucine 274, and leucine 287 to isoleucine 307.

It belongs to the sideroflexin family. Primarily expressed in the brain.

Its subcellular location is the mitochondrion inner membrane. It catalyses the reaction citrate(in) = citrate(out). In terms of biological role, mitochondrial amino-acid transporter. Transports citrate. Does not act as a serine transporter: not able to mediate transport of serine into mitochondria. In brown adipose tissue, plays a role in the regulation of UCP1-dependent thermogenesis probably by supporting mitochondrial glycerol-3-phosphate utilization. This chain is Sideroflexin-5, found in Homo sapiens (Human).